The sequence spans 445 residues: Ktr system potassium uptake protein B (445 aa).

A run of 12 helical transmembrane segments spans residues 19–39 (VLAIGFFLTIIIGAVLLMLPI), 46–66 (SWIDALFTAASATTVTGLAVV), 79–99 (VIMGLIQIGGLGFMTFAVLIV), 127–147 (IGLVKVLFLFSISIELIAALI), 161–181 (GLFASLFHAISAFNNAGFSLW), 196–216 (LVITFLFITGGIGFTVLFDVM), 230–250 (LMLTGTLMLNAIAMLTVFILE), 286–306 (FGSMREGTIVFTLLLMFIGAG), 313–333 (GIKLTTFIVILTSVIAYLRGK), 351–371 (ALAVSVTSLFIVFLGIFALTI), 377–397 (FLQIVFETFSAFGTVGLTMGL), and 408–428 (IIIVIMFIGRIGPLTFVFSFA).

This sequence belongs to the TrkH potassium transport family. Ktr (TC 2.A.38.4) subfamily. Homodimer. Part of the KtrAB complex formed by an octameric catalytic ring of KtrA and a membrane associated dimer of KtrB forming a potassium channel.

It localises to the cell membrane. Integral membrane subunit of the KtrAB potassium uptake transporter. The 2 major potassium transporter complexes KtrAB and KtrCD confer resistance to both suddenly imposed and prolonged osmotic stress. The sequence is that of Ktr system potassium uptake protein B (ktrB) from Bacillus subtilis (strain 168).